Reading from the N-terminus, the 341-residue chain is Cobalt-precorrin-5B C(1)-methyltransferase (341 aa).

The protein belongs to the CbiD family.

It carries out the reaction Co-precorrin-5B + S-adenosyl-L-methionine = Co-precorrin-6A + S-adenosyl-L-homocysteine. The protein operates within cofactor biosynthesis; adenosylcobalamin biosynthesis; cob(II)yrinate a,c-diamide from sirohydrochlorin (anaerobic route): step 6/10. Its function is as follows. Catalyzes the methylation of C-1 in cobalt-precorrin-5B to form cobalt-precorrin-6A. The chain is Cobalt-precorrin-5B C(1)-methyltransferase from Picrophilus torridus (strain ATCC 700027 / DSM 9790 / JCM 10055 / NBRC 100828 / KAW 2/3).